The primary structure comprises 223 residues: RNA-free ribonuclease P (223 aa).

This sequence belongs to the HARP family.

It catalyses the reaction Endonucleolytic cleavage of RNA, removing 5'-extranucleotides from tRNA precursor.. RNA-free RNase P that catalyzes the removal of the 5'-leader sequence from pre-tRNA to produce the mature 5'-terminus. This chain is RNA-free ribonuclease P, found in Methanococcus vannielii (strain ATCC 35089 / DSM 1224 / JCM 13029 / OCM 148 / SB).